A 547-amino-acid polypeptide reads, in one-letter code: Phosphomethylpyrimidine synthase (547 aa).

Positions 1 to 15 are enriched in polar residues; that stretch reads MTETLSKTTEPSVTT. A disordered region spans residues 1–36; that stretch reads MTETLSKTTEPSVTTGPIPGSSKAYREVANPDGGPS. Residues asparagine 150, methionine 179, tyrosine 208, histidine 244, 264–266, 305–308, and glutamate 344 each bind substrate; these read SRG and DGLR. Histidine 348 serves as a coordination point for Zn(2+). Tyrosine 371 serves as a coordination point for substrate. Zn(2+) is bound at residue histidine 412. Cysteine 492, cysteine 495, and cysteine 500 together coordinate [4Fe-4S] cluster.

The protein belongs to the ThiC family. [4Fe-4S] cluster serves as cofactor.

It carries out the reaction 5-amino-1-(5-phospho-beta-D-ribosyl)imidazole + S-adenosyl-L-methionine = 4-amino-2-methyl-5-(phosphooxymethyl)pyrimidine + CO + 5'-deoxyadenosine + formate + L-methionine + 3 H(+). It participates in cofactor biosynthesis; thiamine diphosphate biosynthesis. Its function is as follows. Catalyzes the synthesis of the hydroxymethylpyrimidine phosphate (HMP-P) moiety of thiamine from aminoimidazole ribotide (AIR) in a radical S-adenosyl-L-methionine (SAM)-dependent reaction. The protein is Phosphomethylpyrimidine synthase of Mycobacterium leprae (strain Br4923).